A 133-amino-acid chain; its full sequence is Protein NrdI (133 aa).

It belongs to the NrdI family.

Its function is as follows. Probably involved in ribonucleotide reductase function. This chain is Protein NrdI, found in Cronobacter sakazakii (strain ATCC BAA-894) (Enterobacter sakazakii).